Here is a 245-residue protein sequence, read N- to C-terminus: uncharacterized protein (245 aa).

A run of 6 helical transmembrane segments spans residues 38–58 (IYPA…AIFI), 68–88 (TIEL…QGYF), 100–120 (IWSL…LILA), 129–149 (VLFI…FVSA), 194–214 (VNNI…FLMN), and 217–237 (IAFI…LIIH).

The protein belongs to the acyltransferase 3 family.

Its subcellular location is the cell membrane. This is an uncharacterized protein from Haemophilus influenzae (strain ATCC 51907 / DSM 11121 / KW20 / Rd).